We begin with the raw amino-acid sequence, 376 residues long: Chorismate synthase ARO2 (376 aa).

Serine 2 bears the N-acetylserine mark. Histidine 17 is an active-site residue. A disordered region spans residues 39 to 61; that stretch reads IQPQLTRRRPGQSKLSTPRDEKD. Active-site residues include histidine 104 and aspartate 339.

This sequence belongs to the chorismate synthase family. In terms of assembly, homotetramer.

The enzyme catalyses 5-O-(1-carboxyvinyl)-3-phosphoshikimate = chorismate + phosphate. It catalyses the reaction FMNH2 + NADP(+) = FMN + NADPH + 2 H(+). Its pathway is metabolic intermediate biosynthesis; chorismate biosynthesis; chorismate from D-erythrose 4-phosphate and phosphoenolpyruvate: step 7/7. In terms of biological role, bifunctional chorismate synthase and flavin reductase that catalyzes the conversion of 5-enolpyruvylshikimate 3-phosphate (EPSP) to form chorismate, which is the last common intermediate in the synthesis of the three aromatic amino acids phenylalanine, tyrosine and tryptophan. Also acts as a flavin reductase (FR) able to generate reduced flavin mononucleotide in the presence of NADPH. This chain is Chorismate synthase ARO2, found in Saccharomyces cerevisiae (strain ATCC 204508 / S288c) (Baker's yeast).